Here is a 334-residue protein sequence, read N- to C-terminus: Putative transport protein MJ1177 (334 aa).

7 helical membrane-spanning segments follow: residues 13-33, 61-81, 138-158, 191-211, 234-254, 259-279, and 293-313; these read VIVG…DVLA, LAIS…LLTF, IIDV…TFYF, SYKN…ILSY, LLPI…FFLI, KAVF…DFVI, and VLVV…GFAI.

The protein belongs to the autoinducer-2 exporter (AI-2E) (TC 2.A.86) family.

It is found in the cell membrane. This is Putative transport protein MJ1177 from Methanocaldococcus jannaschii (strain ATCC 43067 / DSM 2661 / JAL-1 / JCM 10045 / NBRC 100440) (Methanococcus jannaschii).